The following is a 357-amino-acid chain: Homoserine O-acetyltransferase (357 aa).

The AB hydrolase-1 domain occupies 51 to 340; the sequence is NVIVICHALT…EPYGHDAFLI (290 aa). Ser147 (nucleophile) is an active-site residue. Arg216 provides a ligand contact to substrate. Catalysis depends on residues Asp306 and His335. A substrate-binding site is contributed by Asp336.

It belongs to the AB hydrolase superfamily. MetX family. As to quaternary structure, homodimer.

The protein localises to the cytoplasm. The catalysed reaction is L-homoserine + acetyl-CoA = O-acetyl-L-homoserine + CoA. Its pathway is amino-acid biosynthesis; L-methionine biosynthesis via de novo pathway; O-acetyl-L-homoserine from L-homoserine: step 1/1. Its function is as follows. Transfers an acetyl group from acetyl-CoA to L-homoserine, forming acetyl-L-homoserine. This Chlorobium chlorochromatii (strain CaD3) protein is Homoserine O-acetyltransferase.